The sequence spans 419 residues: MSFVPVAEDSDFPIHNLPYGVFSTRGNPRPRIGVAIGDQILDLSVIKHLFTGPILSGHQDVFNKPTLNSFMGLGQAAWKEARAFLQNLLSASQARLRDDVELRQRAFTSQASATMYLPATIGDYTDFYSSRHHATNVGVMFRGKENALMPNWLHLPVGYHGRASSVVVSGTPIRRPLGQMRPDDSKPPVYGACKLLDFELEMAFFVGPGNKLGEPIPISKAHEHIFGMVLMNDWSARDIQKWEYVPLGPFLGKSFGTTISPWVVPMDALMPFAVSNPEQDPKPLPYLCHDQPYTFDINLSVALKGEGMSQAATICRSNFKYMYWTMLQQLTHHSVNGCNLQPGDLLASGTISGPEPESFGCMLELSWKGTRAVELGNGQTRKFLLDGDEVIMTGHCQGDGYRIGFGQCAGKVLPALSFA.

Position 2 is an N-acetylserine (serine 2). Serine 92 carries the post-translational modification Phosphoserine. Aspartate 126 contacts Ca(2+). Tyrosine 128 is a binding site for substrate. The Proton acceptor role is filled by histidine 133. Residue arginine 142 participates in substrate binding. Glutamate 199, glutamate 201, and aspartate 233 together coordinate Ca(2+). Residue aspartate 233 participates in Mg(2+) binding. Residues glutamine 240 and tyrosine 244 each contribute to the substrate site. Lysine 253 and threonine 257 together coordinate Mg(2+). Serine 309 bears the Phosphoserine mark. Position 350 (threonine 350) interacts with substrate. Serine 417 bears the Phosphoserine mark.

It belongs to the FAH family. In terms of assembly, homodimer. Ca(2+) is required as a cofactor. Mg(2+) serves as cofactor.

The enzyme catalyses 4-fumarylacetoacetate + H2O = acetoacetate + fumarate + H(+). It participates in amino-acid degradation; L-phenylalanine degradation; acetoacetate and fumarate from L-phenylalanine: step 6/6. The polypeptide is Fumarylacetoacetase (FAH) (Bos taurus (Bovine)).